The chain runs to 111 residues: Nucleoid-associated protein Cpar_0834 (111 aa).

This sequence belongs to the YbaB/EbfC family. In terms of assembly, homodimer.

The protein localises to the cytoplasm. It localises to the nucleoid. In terms of biological role, binds to DNA and alters its conformation. May be involved in regulation of gene expression, nucleoid organization and DNA protection. This Chlorobaculum parvum (strain DSM 263 / NCIMB 8327) (Chlorobium vibrioforme subsp. thiosulfatophilum) protein is Nucleoid-associated protein Cpar_0834.